The following is a 55-amino-acid chain: Large ribosomal subunit protein bL33 (55 aa).

The protein belongs to the bacterial ribosomal protein bL33 family.

The polypeptide is Large ribosomal subunit protein bL33 (Rhizobium johnstonii (strain DSM 114642 / LMG 32736 / 3841) (Rhizobium leguminosarum bv. viciae)).